The primary structure comprises 251 residues: Insulin-induced gene 1 protein (251 aa).

The Cytoplasmic segment spans residues 1 to 58 (MPRLEEHCWSCSCSTSVKTKDLSSAGWIVCKTGEMMSIITSVLSHAYGSLHSLQSANL). Residues 59 to 81 (IRRGLVLFIVGVVLALVLNLLQI) traverse the membrane as a helical segment. The Extracellular portion of the chain corresponds to 82–100 (QRNVTLFPEEVLDTLFSSA). The helical transmembrane segment at 101-118 (WWIPLCCGTAAAVVGLLY) threads the bilayer. The Cytoplasmic segment spans residues 119-133 (PCLDHHLGEPHKFKR). Residues 134–156 (EWASVMRCIAVFVGINHASAKLD) form a helical membrane-spanning segment. Over 157–159 (FAN) the chain is Extracellular. The chain crosses the membrane as a helical span at residues 160–178 (NVQLSLTLAALSLGLWWTF). Topologically, residues 179–183 (DRSRS) are cytoplasmic. A helical membrane pass occupies residues 184–205 (GFGLGLTTALLATLIAQLLVYN). Residues 206–219 (GIYQYTSPDFLYVR) lie on the Extracellular side of the membrane. The helical transmembrane segment at 220–237 (SWLPCIFFSGGVTVGNIG) threads the bilayer. Residues 238–251 (RQLAMGSTEKIHND) lie on the Cytoplasmic side of the membrane. Positions 245–251 (TEKIHND) match the KxHxx motif.

It belongs to the INSIG family. As to quaternary structure, interacts with scap; interaction is direct and only takes place in the presence of sterols; it prevents interaction between scap and the coat protein complex II (COPII). Associates with the SCAP-SREBP complex; association is mediated via its interaction with scap and only takes place in the presence of sterols.

It localises to the endoplasmic reticulum membrane. Oxysterol-binding protein that mediates feedback control of cholesterol synthesis by controlling both endoplasmic reticulum to Golgi transport of scap and degradation of hmgcr. Acts as a negative regulator of cholesterol biosynthesis by mediating the retention of the SCAP-SREBP complex in the endoplasmic reticulum, thereby blocking the processing of sterol regulatory element-binding proteins (SREBPs). Binds oxysterol, including 25-hydroxycholesterol, regulating interaction with scap and retention of the SCAP-SREBP complex in the endoplasmic reticulum. In presence of oxysterol, interacts with scap, retaining the SCAP-SREBP complex in the endoplasmic reticulum, thereby preventing scap from escorting SREBPs to the Golgi. Sterol deprivation reduces oxysterol-binding, disrupting the interaction between insig1 and scap, thereby promoting Golgi transport of the SCAP-SREBP complex, followed by processing and nuclear translocation of SREBPs. Also regulates cholesterol synthesis by regulating degradation of hmgcr. The sequence is that of Insulin-induced gene 1 protein from Danio rerio (Zebrafish).